We begin with the raw amino-acid sequence, 253 residues long: Transmembrane protein 51 (253 aa).

Helical transmembrane passes span 17–37 and 65–85; these read IGLGMLVLGVIMAMWNLVPGF and VAYVLVGAGVMLLLLSICLSI. Disordered regions lie at residues 93-133 and 164-253; these read QGED…YVPS and LTGL…RPPD. Positions 113–124 are enriched in acidic residues; the sequence is EDSQEEEEEDEE. Ser115 is modified (phosphoserine). Residues 164 to 176 are compositionally biased toward polar residues; sequence LTGLDETTPTSTR. Phosphoserine occurs at positions 182 and 192. Basic residues predominate over residues 194 to 205; it reads LAKRLKPLKVRR. The span at 206–217 shows a compositional bias: basic and acidic residues; that stretch reads IKSEKLHLKDFR. Residues 224–238 show a composition bias toward pro residues; that stretch reads NVPPPSIEPLTPPPQ. The segment covering 242–253 has biased composition (basic and acidic residues); it reads VQEKAPDTRPPD.

Its subcellular location is the membrane. The chain is Transmembrane protein 51 (TMEM51) from Homo sapiens (Human).